The sequence spans 294 residues: MADDPQRNFRSAYYEKVGFRGVEEKKSLEILLKDNPLDVEKLSTFSQRFPLPSMYRIHVWKVLLGILPPHSDSHALVRQYRVDQFEDVSCALTVMRFIHASTPQTEIYLRMFQLENHTLPRRTELRPPDAEDENFLAIARAMEEIVDDPVDCFWLVRCFINQFKHKFGDSIPHLPKSLEHFLSQEDVCLLSHLKASGALALLPYSLWFRRCFAGCLPESSLQRVWDKVISGSCKILVFVAVEILLSHKIVIMGMNQPDAIYHFLSNMPQENTDAIVTKAIDLWHKYCGTPMHSV.

The Rab-GAP TBC domain maps to 50-232 (PLPSMYRIHV…RVWDKVISGS (183 aa)).

In terms of assembly, component of the TSC-TBC complex (also named Rhebulator complex), composed of 2 molecules of TSC1, 2 molecules of TSC2 and 1 molecule of TBC1D7.

It is found in the lysosome membrane. The protein resides in the cytoplasmic vesicle. It localises to the cytoplasm. Its subcellular location is the cytosol. In terms of biological role, non-catalytic component of the TSC-TBC complex, a multiprotein complex that acts as a negative regulator of the canonical mTORC1 complex, an evolutionarily conserved central nutrient sensor that stimulates anabolic reactions and macromolecule biosynthesis to promote cellular biomass generation and growth. The TSC-TBC complex acts as a GTPase-activating protein (GAP) for the small GTPase RHEB, a direct activator of the protein kinase activity of mTORC1. In absence of nutrients, the TSC-TBC complex inhibits mTORC1, thereby preventing phosphorylation of ribosomal protein S6 kinase (RPS6KB1 and RPS6KB2) and EIF4EBP1 (4E-BP1) by the mTORC1 signaling. The TSC-TBC complex is inactivated in response to nutrients, relieving inhibition of mTORC1. The protein is TBC1 domain family member 7 (tbc1d7) of Danio rerio (Zebrafish).